A 255-amino-acid chain; its full sequence is MSDDNSVTKVAAFYQFAALPDYRELREPLRAFCAGLALKGSVLLAQEGINGTIAGAPDAIDAFAHELAHGTMFGGRLDNLELKFSTAEAMPFGRLKVRLKKEIVTLGDAAADPTRQVGTYVDAAAWNALIAAPDTLVLDTRNAFEVAMGTFEGAVDPGIKSFGQFKDFAAERLDPAKHRRIAMFCTGGIRCEKASAHLLARGFAEVYHLKGGILKYLEEVPEAQSRWRGECFVFDERVALGHGLRERDKDATRDQ.

The region spanning 131–225 (AAPDTLVLDT…YLEEVPEAQS (95 aa)) is the Rhodanese domain. The Cysteine persulfide intermediate role is filled by Cys-185.

The protein belongs to the TrhO family.

The enzyme catalyses uridine(34) in tRNA + AH2 + O2 = 5-hydroxyuridine(34) in tRNA + A + H2O. Functionally, catalyzes oxygen-dependent 5-hydroxyuridine (ho5U) modification at position 34 in tRNAs. This chain is tRNA uridine(34) hydroxylase, found in Bradyrhizobium diazoefficiens (strain JCM 10833 / BCRC 13528 / IAM 13628 / NBRC 14792 / USDA 110).